Here is a 92-residue protein sequence, read N- to C-terminus: MKFVIVLACLLAVVFANEEADVVKSDSEVNLLDFNYAYELSNHIRAVQTGALKEHDNWVVSGEYEYVAPNGKTVKVVYTADETGYHPKVVEA.

The first 16 residues, Met1–Ala16, serve as a signal peptide directing secretion. The 62-residue stretch at Leu31–Ala92 folds into the Chitin-binding type R&amp;R domain.

Its function is as follows. Component of the cuticle of the larva. This Drosophila melanogaster (Fruit fly) protein is Larval cuticle protein 9 (Lcp9).